A 356-amino-acid chain; its full sequence is Arginine kinase Scy s 2 (356 aa).

The region spanning 9 to 91 (KLEEGFKKLE…FDPIIEDYHK (83 aa)) is the Phosphagen kinase N-terminal domain. Residue 64–68 (GVGVY) coordinates L-arginine. The Phosphagen kinase C-terminal domain occupies 119–356 (FVISTRVRCG…LELIKMEKEM (238 aa)). ATP-binding positions include 122-126 (STRVR) and histidine 185. Glutamate 225 contacts L-arginine. Position 229 (arginine 229) interacts with ATP. Position 271 (cysteine 271) interacts with L-arginine. Residues 280 to 284 (RASVH) and 309 to 314 (RGTRGE) contribute to the ATP site. Glutamate 314 is an L-arginine binding site.

The protein belongs to the ATP:guanido phosphotransferase family. Muscle (at protein level).

The catalysed reaction is L-arginine + ATP = N(omega)-phospho-L-arginine + ADP + H(+). Functionally, catalyzes the reversible transfer of high energy ATP gamma-phosphate group to L-arginine. This Scylla serrata (Mud crab) protein is Arginine kinase Scy s 2.